Here is a 314-residue protein sequence, read N- to C-terminus: BTB/POZ domain-containing protein KCTD17 (314 aa).

One can recognise a BTB domain in the interval 24–94; that stretch reads KWVRLNVGGT…LRHGKLVLDK (71 aa). The segment at 190 to 268 is disordered; it reads STPNGLSSES…PAGGSRPHPL (79 aa). Residues 196–239 are a coiled coil; sequence SSESSRKTKSTEEQLEEQQQQEEEVEEVEVEQVQVEADAQEKAQ. Positions 208-225 are enriched in acidic residues; sequence EQLEEQQQQEEEVEEVEV.

As to quaternary structure, homopentamer; forms a closed pentamer. Interacts with CUL3; interaction is direct and forms a 5:5 heterodecamer. Interacts with TCHP. Interacts with CUL3, as part of the BCR(KCTD17) E3 ubiquitin ligase complex, at least composed of CUL3, KCTD17 and RBX1. In terms of tissue distribution, highly expressed in brain. Highest expression is observed in the putamen and the thalamus.

The protein resides in the cytoplasm. Substrate-adapter for CUL3-RING ubiquitin ligase complexes which mediates the ubiquitination and subsequent proteasomal degradation of TCHP, a protein involved in ciliogenesis down-regulation. Thereby, positively regulates ciliogenesis, playing a crucial role in the initial steps of axoneme extension. May also play a role in endoplasmic reticulum calcium ion homeostasis. The protein is BTB/POZ domain-containing protein KCTD17 of Homo sapiens (Human).